We begin with the raw amino-acid sequence, 309 residues long: SUR7 family protein FMP45 (309 aa).

Topologically, residues 1–5 (MIFKR) are cytoplasmic. The helical transmembrane segment at 6-26 (FVNLLVFLFLLGAGLLTFFLI) threads the bilayer. The Extracellular portion of the chain corresponds to 27–116 (LSGGRESGTL…YYLSRVGWAM (90 aa)). Asn-73 is a glycosylation site (N-linked (GlcNAc...) asparagine). Residues 117-137 (LLISLFFIVLALVPGFLATFL) form a helical membrane-spanning segment. Residues 138 to 140 (PFK) are Cytoplasmic-facing. The helical transmembrane segment at 141-161 (AVPVLYCVLSWLAFFFIILAA) threads the bilayer. Over 162–188 (CLYTGCYVKARKTFRNSGRSARLGPKN) the chain is Extracellular. A helical transmembrane segment spans residues 189 to 209 (FAFIWTSVFLMLVNAIWSTIF). At 210–309 (SATHKAHSTY…GLAGPVTVRD (100 aa)) the chain is on the cytoplasmic side. Phosphoserine is present on residues Ser-230 and Ser-232. Thr-235 carries the post-translational modification Phosphothreonine. The segment at 253–309 (GPITAAPVVGQPQPTTTTTPAGNGKFFQKLKTRKQVPSAELEPAGDGGLAGPVTVRD) is disordered. The span at 258-274 (APVVGQPQPTTTTTPAG) shows a compositional bias: low complexity.

It belongs to the SUR7 family.

It is found in the cell membrane. In terms of biological role, involved in sporulation and affects the sphingolipid composition of the plasma membrane. This chain is SUR7 family protein FMP45 (FMP45), found in Saccharomyces cerevisiae (strain ATCC 204508 / S288c) (Baker's yeast).